The following is a 376-amino-acid chain: Queuine tRNA-ribosyltransferase (376 aa).

Catalysis depends on aspartate 90, which acts as the Proton acceptor. Substrate is bound by residues 90 to 94 (DSGGF), aspartate 144, glutamine 193, and glycine 220. Positions 251–257 (GVGTPED) are RNA binding. The active-site Nucleophile is aspartate 270. The tract at residues 275–279 (TRNAR) is RNA binding; important for wobble base 34 recognition. Residues cysteine 308, cysteine 310, cysteine 313, and histidine 339 each contribute to the Zn(2+) site.

It belongs to the queuine tRNA-ribosyltransferase family. As to quaternary structure, homodimer. Within each dimer, one monomer is responsible for RNA recognition and catalysis, while the other monomer binds to the replacement base PreQ1. Requires Zn(2+) as cofactor.

It carries out the reaction 7-aminomethyl-7-carbaguanine + guanosine(34) in tRNA = 7-aminomethyl-7-carbaguanosine(34) in tRNA + guanine. The protein operates within tRNA modification; tRNA-queuosine biosynthesis. Its function is as follows. Catalyzes the base-exchange of a guanine (G) residue with the queuine precursor 7-aminomethyl-7-deazaguanine (PreQ1) at position 34 (anticodon wobble position) in tRNAs with GU(N) anticodons (tRNA-Asp, -Asn, -His and -Tyr). Catalysis occurs through a double-displacement mechanism. The nucleophile active site attacks the C1' of nucleotide 34 to detach the guanine base from the RNA, forming a covalent enzyme-RNA intermediate. The proton acceptor active site deprotonates the incoming PreQ1, allowing a nucleophilic attack on the C1' of the ribose to form the product. After dissociation, two additional enzymatic reactions on the tRNA convert PreQ1 to queuine (Q), resulting in the hypermodified nucleoside queuosine (7-(((4,5-cis-dihydroxy-2-cyclopenten-1-yl)amino)methyl)-7-deazaguanosine). The protein is Queuine tRNA-ribosyltransferase of Cupriavidus taiwanensis (strain DSM 17343 / BCRC 17206 / CCUG 44338 / CIP 107171 / LMG 19424 / R1) (Ralstonia taiwanensis (strain LMG 19424)).